A 255-amino-acid chain; its full sequence is Geranylgeranylglyceryl phosphate synthase (255 aa).

Asp-34 and Thr-64 together coordinate Mg(2+). Residues 182–188, 213–214, and 235–236 each bind sn-glycerol 1-phosphate; these read YLEAGSG, GG, and GN.

The protein belongs to the GGGP/HepGP synthase family. Group II subfamily. The cofactor is Mg(2+).

Its subcellular location is the cytoplasm. It catalyses the reaction sn-glycerol 1-phosphate + (2E,6E,10E)-geranylgeranyl diphosphate = sn-3-O-(geranylgeranyl)glycerol 1-phosphate + diphosphate. Its pathway is membrane lipid metabolism; glycerophospholipid metabolism. In terms of biological role, prenyltransferase that catalyzes the transfer of the geranylgeranyl moiety of geranylgeranyl diphosphate (GGPP) to the C3 hydroxyl of sn-glycerol-1-phosphate (G1P). This reaction is the first ether-bond-formation step in the biosynthesis of archaeal membrane lipids. The protein is Geranylgeranylglyceryl phosphate synthase of Saccharolobus solfataricus (strain ATCC 35092 / DSM 1617 / JCM 11322 / P2) (Sulfolobus solfataricus).